Reading from the N-terminus, the 63-residue chain is Adipokinetic prohormone type 1 (63 aa).

The signal sequence occupies residues Met1–Ala22. Gln23 is modified (pyrrolidone carboxylic acid). Position 32 is a threonine amide (Thr32).

This sequence belongs to the AKH/HRTH/RPCH family. In terms of assembly, adipokinetic hormone precursor-related peptide (APRP) can form three type of disulfide-bond dimers: p1 (alpha-alpha), p2 (alpha-beta), and p3 (beta-beta).

It is found in the secreted. Functionally, this hormone, released from cells in the corpora cardiaca, causes release of diglycerides from the fat body and stimulation of muscles to use these diglycerides as an energy source during energy-demanding processes. This Schistocerca nitens (Vagrant locust) protein is Adipokinetic prohormone type 1.